Consider the following 1165-residue polypeptide: Chitin synthase 3 (1165 aa).

The Cytoplasmic portion of the chain corresponds to 1 to 170; the sequence is MTGLNGDDPD…ETNDTLSFWQ (170 aa). Disordered regions lie at residues 19–53 and 74–97; these read DEES…NNPD and PSST…GSVR. Over residues 74 to 92 the composition is skewed to polar residues; sequence PSSTGVNPNATRRSGSLRS. A Glycyl lysine isopeptide (Lys-Gly) (interchain with G-Cter in ubiquitin) cross-link involves residue Lys-136. A helical membrane pass occupies residues 171–191; sequence MYCYFITFWAPAPILAFCGMP. Topologically, residues 192-340 are extracellular; the sequence is KKERQMAWRE…PNFTVENYAG (149 aa). N-linked (GlcNAc...) asparagine glycans are attached at residues Asn-303 and Asn-332. Residues 341-354 form a helical membrane-spanning segment; that stretch reads WNCHTSKEDRDAFY. Over 355 to 452 the chain is Cytoplasmic; the sequence is GLKSKADVYF…SKTVGCIASD (98 aa). A helical transmembrane segment spans residues 453 to 473; the sequence is VVLYVSLVFILSVVIIKFIIA. Topologically, residues 474–891 are extracellular; sequence CYFRWTVARK…EYYISHHQAK (418 aa). Ser-537 is subject to Phosphoserine. The residue at position 538 (Thr-538) is a Phosphothreonine. Residues 892-910 traverse the membrane as a helical segment; the sequence is AFESVFGSVTCLPGCFSMY. Over 911–1029 the chain is Cytoplasmic; the sequence is RIKSPKGSDG…SMQFVIGIEL (119 aa). Residues 1030 to 1050 traverse the membrane as a helical segment; that stretch reads IGTMVLPLAICFTIYVIIFAI. Residues 1051 to 1055 lie on the Extracellular side of the membrane; the sequence is VSKPT. Residues 1056–1076 form a helical membrane-spanning segment; that stretch reads PVITLVLLAIILGLPGLIVVI. Residues 1077-1165 are Cytoplasmic-facing; sequence TATRWSYLWW…RKEESDSFVA (89 aa).

The protein belongs to the chitin synthase family. Class IV subfamily. Homodimer. May form higher order oligomers. Seems to interact with BNI4 and SKT5 which link CHS3 to septins. In terms of processing, glycosylated. Post-translationally, palmitoylated by PFA4; required for proper export from the ER.

Its subcellular location is the cell membrane. It is found in the bud neck. The protein resides in the cytoplasmic vesicle membrane. It carries out the reaction [(1-&gt;4)-N-acetyl-beta-D-glucosaminyl](n) + UDP-N-acetyl-alpha-D-glucosamine = [(1-&gt;4)-N-acetyl-beta-D-glucosaminyl](n+1) + UDP + H(+). Its function is as follows. Polymerizes chitin, a structural polymer of the cell wall and septum, by transferring the sugar moiety of UDP-GlcNAc to the non-reducing end of the growing chitin polymer. Appears to be responsible for synthesis of the majority of the chitin found in the cell wall periphery. It is involved in the synthesis of the chitin ring that forms in the cell wall just before bud emergence. This ring remains at the base of the bud as the bud grows and ultimately forms part of the bud scar marking the division site on the mother cell. Also catalyzes the synthesis of chitin laid down during mating and spore cell-wall synthesis. The sequence is that of Chitin synthase 3 from Saccharomyces cerevisiae (strain ATCC 204508 / S288c) (Baker's yeast).